A 38-amino-acid chain; its full sequence is MTPSLANFLWSLVYGAVVLGLLFGAIVFVSQRDRVRRR.

A helical membrane pass occupies residues 8 to 28; that stretch reads FLWSLVYGAVVLGLLFGAIVF.

The protein belongs to the PsbX family. Type 1 subfamily. PSII is composed of 1 copy each of membrane proteins PsbA, PsbB, PsbC, PsbD, PsbE, PsbF, PsbH, PsbI, PsbJ, PsbK, PsbL, PsbM, PsbT, PsbX, PsbY, PsbZ, Psb30/Ycf12, peripheral proteins PsbO, CyanoQ (PsbQ), PsbU, PsbV and a large number of cofactors. It forms dimeric complexes.

Its subcellular location is the cellular thylakoid membrane. Involved in the binding and/or turnover of quinones at the Q(B) site of photosystem II (PSII). PSII is a light-driven water plastoquinone oxidoreductase, using light energy to abstract electrons from H(2)O, generating a proton gradient subsequently used for ATP formation. This is Photosystem II reaction center protein X 2 from Synechococcus sp. (strain JA-3-3Ab) (Cyanobacteria bacterium Yellowstone A-Prime).